The chain runs to 250 residues: Agamous-like MADS-box protein AGL8 homolog (250 aa).

The region spanning 3-57 is the MADS-box domain; it reads RGRVQLKRIENKINRQVTFSKRRSGLLKKAHEISVLCDAEVGLIVFSTKGKLFEY. In terms of domain architecture, K-box spans 88–178; sequence PGSWTLENAK…SKKVKEREKE (91 aa). 2 disordered regions span residues 162–191 and 206–241; these read QEQNNQLSKKVKEREKEVEQQNQWDQQNHE and PHLGEASQNTNVVDNGEVEGGNSSQXQGAANNTVMP. Residues 171 to 180 show a composition bias toward basic and acidic residues; sequence KVKEREKEVE. Composition is skewed to polar residues over residues 181 to 191 and 226 to 240; these read QQNQWDQQNHE and GNSSQXQGAANNTVM.

Its subcellular location is the nucleus. Its function is as follows. Probable transcription factor. The polypeptide is Agamous-like MADS-box protein AGL8 homolog (SCM1) (Solanum commersonii (Commerson's wild potato)).